We begin with the raw amino-acid sequence, 197 residues long: MQIVLASQSPSRRKILNSAGVEPLIHPADVDEDALLHSLNGSAPEEIVRQLALAKAQVVAPSYPGDVVIGGDSMLLIDATLQGKPHTREATIERWKQQRGNKATLITGHAIIFGDEVIVESSSTNIHFAEASDVDIERYADSGEPLECAGAFTLEALGGWFIDSIEGDPSSVIGLSLPVVRRALYRLGFNASDFWNM.

Asp72 functions as the Proton acceptor in the catalytic mechanism.

The protein belongs to the Maf family. Requires a divalent metal cation as cofactor.

The protein resides in the cytoplasm. It carries out the reaction a ribonucleoside 5'-triphosphate + H2O = a ribonucleoside 5'-phosphate + diphosphate + H(+). The catalysed reaction is a 2'-deoxyribonucleoside 5'-triphosphate + H2O = a 2'-deoxyribonucleoside 5'-phosphate + diphosphate + H(+). Functionally, nucleoside triphosphate pyrophosphatase. May have a dual role in cell division arrest and in preventing the incorporation of modified nucleotides into cellular nucleic acids. The protein is Nucleoside triphosphate pyrophosphatase of Corynebacterium glutamicum (strain R).